Consider the following 209-residue polypeptide: Ribosomal RNA large subunit methyltransferase E (209 aa).

Gly63, Trp65, Asp83, Asp99, and Asp124 together coordinate S-adenosyl-L-methionine. The active-site Proton acceptor is the Lys164. A TRAM domain is found at 191 to 209; the sequence is EASRGRSREVYIVAMGYMG.

It belongs to the class I-like SAM-binding methyltransferase superfamily. RNA methyltransferase RlmE family.

Its subcellular location is the cytoplasm. It catalyses the reaction uridine(2552) in 23S rRNA + S-adenosyl-L-methionine = 2'-O-methyluridine(2552) in 23S rRNA + S-adenosyl-L-homocysteine + H(+). Functionally, specifically methylates the uridine in position 2552 of 23S rRNA at the 2'-O position of the ribose in the fully assembled 50S ribosomal subunit. The chain is Ribosomal RNA large subunit methyltransferase E from Histophilus somni (strain 129Pt) (Haemophilus somnus).